Reading from the N-terminus, the 179-residue chain is Large ribosomal subunit protein bL27c (179 aa).

The N-terminal 51 residues, 1 to 51 (MAVSFSLVGAFKGLSLASSSSFLKGDFGAAFPVAPKFSVSFPLKSPLTIES), are a transit peptide targeting the chloroplast.

This sequence belongs to the bacterial ribosomal protein bL27 family. As to quaternary structure, part of the 50S ribosomal subunit.

The protein localises to the plastid. It localises to the chloroplast. This chain is Large ribosomal subunit protein bL27c (RPL27), found in Nicotiana tabacum (Common tobacco).